We begin with the raw amino-acid sequence, 414 residues long: 3-ketoacyl-CoA thiolase, peroxisomal (414 aa).

A peroxisome-targeting transit peptide spans 1–9; sequence MDRLNNLAT. Residues 1–9 are PTS2-type peroxisomal targeting signal; sequence MDRLNNLAT. C115 serves as the catalytic Acyl-thioester intermediate. Catalysis depends on proton acceptor residues H370 and C400.

This sequence belongs to the thiolase-like superfamily. Thiolase family. Homodimer. Interacts (via PTS2-type peroxisomal targeting signal region) with PEX7; leading to its translocation into peroxisomes.

The protein resides in the peroxisome. The enzyme catalyses an acyl-CoA + acetyl-CoA = a 3-oxoacyl-CoA + CoA. The protein operates within lipid metabolism; fatty acid metabolism. In terms of biological role, responsible for the thiolytic cleavage of straight chain 3-keto fatty acyl-CoAs (3-oxoacyl-CoAs). This is 3-ketoacyl-CoA thiolase, peroxisomal (POT1) from Yarrowia lipolytica (strain CLIB 122 / E 150) (Yeast).